The chain runs to 485 residues: Trigger factor (485 aa).

Residues 171 to 256 form the PPIase FKBP-type domain; the sequence is GDRVVIDFVG…VKAVKAPGEA (86 aa). The disordered stretch occupies residues 443–485; the sequence is FADDEDEAAEAAAPASEAGASKGVISEGVISEGSAPSHETGAA. Over residues 452–462 the composition is skewed to low complexity; it reads EAAAPASEAGA.

It belongs to the FKBP-type PPIase family. Tig subfamily.

The protein localises to the cytoplasm. The enzyme catalyses [protein]-peptidylproline (omega=180) = [protein]-peptidylproline (omega=0). Its function is as follows. Involved in protein export. Acts as a chaperone by maintaining the newly synthesized protein in an open conformation. Functions as a peptidyl-prolyl cis-trans isomerase. This is Trigger factor from Methylobacterium sp. (strain 4-46).